The sequence spans 93 residues: Progonadoliberin-2 (93 aa).

The signal sequence occupies residues 1-24 (MACQRHLLFLLLVLFAVSTQLSHG). Glutamine 25 bears the Pyrrolidone carboxylic acid mark. Glycine 34 bears the Glycine amide mark.

It belongs to the GnRH family. Midbrain and hindbrain.

It is found in the secreted. In terms of biological role, stimulates the secretion of gonadotropins. This chain is Progonadoliberin-2 (gnrh2), found in Aquarana catesbeiana (American bullfrog).